Reading from the N-terminus, the 119-residue chain is MARVKRGVTAHAKHKKVYKLAKGYRGRRKNTIRTAKAAVDKAGQYAFRDRKRKKRTFRALWIQRLNAAVRPFGMTYSVFINGLSKSGIVVDRKVLSDLAINEPAAFQAIAEKAKAALAA.

It belongs to the bacterial ribosomal protein bL20 family.

Its function is as follows. Binds directly to 23S ribosomal RNA and is necessary for the in vitro assembly process of the 50S ribosomal subunit. It is not involved in the protein synthesizing functions of that subunit. The polypeptide is Large ribosomal subunit protein bL20 (Rhodopseudomonas palustris (strain ATCC BAA-98 / CGA009)).